We begin with the raw amino-acid sequence, 292 residues long: Complex I assembly factor TIMMDC1, mitochondrial (292 aa).

2 consecutive transmembrane segments (helical) span residues 146–168 (WSWRVAAFVTLFNTVNTGLTVYR) and 195–215 (GLLSGTIIGVILGFPAGVLIL).

This sequence belongs to the Tim17/Tim22/Tim23 family. Associates with the intermediate 315 kDa subcomplex of incompletely assembled complex I.

The protein resides in the mitochondrion membrane. Chaperone protein involved in the assembly of the mitochondrial NADH:ubiquinone oxidoreductase complex (complex I). Participates in constructing the membrane arm of complex I. This Danio rerio (Zebrafish) protein is Complex I assembly factor TIMMDC1, mitochondrial (timmdc1).